A 416-amino-acid chain; its full sequence is Serine hydroxymethyltransferase (416 aa).

Residues Leu121 and 125–127 contribute to the (6S)-5,6,7,8-tetrahydrofolate site; that span reads GHL. An N6-(pyridoxal phosphate)lysine modification is found at Lys230. A (6S)-5,6,7,8-tetrahydrofolate-binding site is contributed by 355 to 357; sequence SPF.

The protein belongs to the SHMT family. Homodimer. Requires pyridoxal 5'-phosphate as cofactor.

It is found in the cytoplasm. It catalyses the reaction (6R)-5,10-methylene-5,6,7,8-tetrahydrofolate + glycine + H2O = (6S)-5,6,7,8-tetrahydrofolate + L-serine. It functions in the pathway one-carbon metabolism; tetrahydrofolate interconversion. The protein operates within amino-acid biosynthesis; glycine biosynthesis; glycine from L-serine: step 1/1. Catalyzes the reversible interconversion of serine and glycine with tetrahydrofolate (THF) serving as the one-carbon carrier. This reaction serves as the major source of one-carbon groups required for the biosynthesis of purines, thymidylate, methionine, and other important biomolecules. Also exhibits THF-independent aldolase activity toward beta-hydroxyamino acids, producing glycine and aldehydes, via a retro-aldol mechanism. The chain is Serine hydroxymethyltransferase from Streptococcus thermophilus (strain CNRZ 1066).